A 230-amino-acid polypeptide reads, in one-letter code: Small ribosomal subunit protein uS3c (230 aa).

One can recognise a KH type-2 domain in the interval 39–109; it reads IRSFIHGKLS…QIRVNVVEIS (71 aa).

This sequence belongs to the universal ribosomal protein uS3 family. In terms of assembly, part of the 30S ribosomal subunit.

It is found in the plastid. The protein resides in the chloroplast. In Porphyra purpurea (Red seaweed), this protein is Small ribosomal subunit protein uS3c (rps3).